The sequence spans 363 residues: Chorismate synthase (363 aa).

R47 is an NADP(+) binding site. FMN is bound by residues R124–S126, G286, K301–T305, and R327.

It belongs to the chorismate synthase family. In terms of assembly, homotetramer. FMNH2 is required as a cofactor.

The enzyme catalyses 5-O-(1-carboxyvinyl)-3-phosphoshikimate = chorismate + phosphate. Its pathway is metabolic intermediate biosynthesis; chorismate biosynthesis; chorismate from D-erythrose 4-phosphate and phosphoenolpyruvate: step 7/7. Its function is as follows. Catalyzes the anti-1,4-elimination of the C-3 phosphate and the C-6 proR hydrogen from 5-enolpyruvylshikimate-3-phosphate (EPSP) to yield chorismate, which is the branch point compound that serves as the starting substrate for the three terminal pathways of aromatic amino acid biosynthesis. This reaction introduces a second double bond into the aromatic ring system. This is Chorismate synthase from Prochlorococcus marinus (strain MIT 9211).